The following is a 397-amino-acid chain: Acetate kinase (397 aa).

Asn-7 contacts Mg(2+). Lys-14 contributes to the ATP binding site. Arg-90 provides a ligand contact to substrate. The Proton donor/acceptor role is filled by Asp-147. Residues 207 to 211, 282 to 284, and 330 to 334 contribute to the ATP site; these read HLGNG, DFR, and GIGEN. Glu-384 contacts Mg(2+).

Belongs to the acetokinase family. As to quaternary structure, homodimer. The cofactor is Mg(2+). Requires Mn(2+) as cofactor.

It is found in the cytoplasm. The enzyme catalyses acetate + ATP = acetyl phosphate + ADP. It functions in the pathway metabolic intermediate biosynthesis; acetyl-CoA biosynthesis; acetyl-CoA from acetate: step 1/2. Functionally, catalyzes the formation of acetyl phosphate from acetate and ATP. Can also catalyze the reverse reaction. The polypeptide is Acetate kinase (Agathobacter rectalis (strain ATCC 33656 / DSM 3377 / JCM 17463 / KCTC 5835 / VPI 0990) (Eubacterium rectale)).